The chain runs to 133 residues: DNA-directed RNA polymerase subunit omega (133 aa).

It belongs to the RNA polymerase subunit omega family. In terms of assembly, the RNAP catalytic core consists of 2 alpha, 1 beta, 1 beta' and 1 omega subunit. When a sigma factor is associated with the core the holoenzyme is formed, which can initiate transcription.

It catalyses the reaction RNA(n) + a ribonucleoside 5'-triphosphate = RNA(n+1) + diphosphate. Its function is as follows. Promotes RNA polymerase assembly. Latches the N- and C-terminal regions of the beta' subunit thereby facilitating its interaction with the beta and alpha subunits. The chain is DNA-directed RNA polymerase subunit omega from Brucella abortus (strain S19).